A 722-amino-acid polypeptide reads, in one-letter code: DUF724 domain-containing protein 7 (722 aa).

The interval 424-449 (KTTPKKKLQAMKNQKSSTNDSVGEKV) is disordered. The span at 434 to 444 (MKNQKSSTNDS) shows a compositional bias: polar residues. Positions 540 to 720 (VLPFVKKSQL…HEFQAILAAP (181 aa)) constitute a DUF724 domain. Positions 645–712 (CALEELKAVE…DQEVQNVDHE (68 aa)) form a coiled coil.

In terms of assembly, homodimer. Interacts wtih ABAP1, ARIA and LHP1. Interacts with the non-modified histones H1, H2B, H3 and H4. In terms of tissue distribution, expressed in roots, leaves, stems and flowers.

It is found in the nucleus. May act as a link between DNA replication, transcription and chromatin remodeling during flower development. May participate in the repression of LHP1-targeted genes during flower development by direct interaction with LHP1. May be involved in the polar growth of plant cells via transportation of RNAs. In Arabidopsis thaliana (Mouse-ear cress), this protein is DUF724 domain-containing protein 7.